A 378-amino-acid polypeptide reads, in one-letter code: Fetuin-B (378 aa).

Residues 1 to 18 form the signal peptide; that stretch reads MGVLRLLVLCTLAACCVA. 2 Cystatin fetuin-B-type domains span residues 28–141 and 152–261; these read NAPF…YNCT and SMCP…VSCE. Asn-40 carries N-linked (GlcNAc...) asparagine glycosylation. 5 cysteine pairs are disulfide-bonded: Cys-96–Cys-107, Cys-120–Cys-140, Cys-154–Cys-157, Cys-217–Cys-224, and Cys-237–Cys-260. Residue Asn-139 is glycosylated (N-linked (GlcNAc...) asparagine). 2 disordered regions span residues 266–338 and 357–378; these read QDQV…PQGD and LPFPGKEQRSPECPGPEKQRTP. Positions 286–297 are enriched in polar residues; that stretch reads QKNTAPTSSPSI. Residues Thr-289 and Thr-292 are each glycosylated (O-linked (GalNAc...) threonine). At Ser-316 the chain carries Phosphoserine. Residues 362-378 show a composition bias toward basic and acidic residues; that stretch reads KEQRSPECPGPEKQRTP.

It belongs to the fetuin family. As to expression, liver.

Its subcellular location is the secreted. Functionally, protease inhibitor required for egg fertilization. Required to prevent premature zona pellucida hardening before fertilization, probably by inhibiting the protease activity of ASTL, a protease that mediates the cleavage of ZP2 and triggers zona pellucida hardening. This chain is Fetuin-B (Fetub), found in Rattus norvegicus (Rat).